The chain runs to 223 residues: MWSQFIAILSQSMPIGVCRKYPVCQTHLKKLKVADLSQESKDSEMAAMTEYISSNRPWGQGSYPSNGYVSPVSGCTLHFGNVSTLHPDSAALDGRLREMAEVLGVQDYASAPVRVSSTGYIDKVKAMVYEIDGVESMSMADLMGCTQLHQLAGKVASDIQSGAINHREFAGEILSNMVGPLRELLPKEDCDSIVSILEKVRDGEAVSADEVFPIITKFQEAGF.

This is an uncharacterized protein from Dryophytes versicolor (chameleon treefrog).